Here is a 154-residue protein sequence, read N- to C-terminus: Small ribosomal subunit protein uS7c (154 aa).

Belongs to the universal ribosomal protein uS7 family. As to quaternary structure, part of the 30S ribosomal subunit.

It is found in the plastid. Its subcellular location is the chloroplast. Functionally, one of the primary rRNA binding proteins, it binds directly to 16S rRNA where it nucleates assembly of the head domain of the 30S subunit. This Pleurastrum terricola (Filamentous green alga) protein is Small ribosomal subunit protein uS7c (rps7).